A 464-amino-acid polypeptide reads, in one-letter code: MSVEKTNQSWGGRFSEPVDAFVARFTASVDFDKRLYRHDIMGSIAHATMLAKVGVLSDAERDAIVDGLQQIQAEIEAGSFDWRVDLEDVHMNIEARLTDRIGVTGKKLHTGRSRNDQVATDIRLWLRDEIDTILAEITRLQQGLLGLAEAEADTIMPGFTHLQTAQPVTFGHHLLAWFEMLGRDYERLVDCHRRVNRMPLGSAALAGTTYPIQREITCQLLGFEAIGGNSLDGVSDRDFAIEFCAAASLAMMHLSRFSEELVLWTSAQFQFIDLPDRFCTGSSIMPQKKNPDVPELVRGKSGRVFGALTGLLTLMKGQPLAYNKDNQEDKEPLFDAADTLRDSLRAFADMVPAIRPRREVMREAARRGFSTATDLADYLVRKGLPFRDCHEIVGHAVKYGVDSGKDLAEMSLDELRRFSEQIDADVFAVLTLEGSVNARDHIGGTAPNQVRAAVARGRQLLAQR.

This sequence belongs to the lyase 1 family. Argininosuccinate lyase subfamily.

It localises to the cytoplasm. It catalyses the reaction 2-(N(omega)-L-arginino)succinate = fumarate + L-arginine. Its pathway is amino-acid biosynthesis; L-arginine biosynthesis; L-arginine from L-ornithine and carbamoyl phosphate: step 3/3. The chain is Argininosuccinate lyase from Pseudomonas paraeruginosa (strain DSM 24068 / PA7) (Pseudomonas aeruginosa (strain PA7)).